The chain runs to 159 residues: Major allergen Pyr c 1 (159 aa).

The protein belongs to the BetVI family.

The sequence is that of Major allergen Pyr c 1 (PYRC1) from Pyrus communis (Pear).